The following is a 734-amino-acid chain: DNA ligase (734 aa).

Residues 42-46 (DAEYD), 91-92 (SL), and glutamate 125 contribute to the NAD(+) site. The active-site N6-AMP-lysine intermediate is lysine 127. Arginine 148, glutamate 185, lysine 301, and lysine 325 together coordinate NAD(+). Cysteine 430, cysteine 433, cysteine 454, and cysteine 460 together coordinate Zn(2+). In terms of domain architecture, BRCT spans 655–734 (SADSEVAGKT…DTWLQRVGKA (80 aa)).

The protein belongs to the NAD-dependent DNA ligase family. LigA subfamily. The cofactor is Mg(2+). Mn(2+) is required as a cofactor.

The catalysed reaction is NAD(+) + (deoxyribonucleotide)n-3'-hydroxyl + 5'-phospho-(deoxyribonucleotide)m = (deoxyribonucleotide)n+m + AMP + beta-nicotinamide D-nucleotide.. In terms of biological role, DNA ligase that catalyzes the formation of phosphodiester linkages between 5'-phosphoryl and 3'-hydroxyl groups in double-stranded DNA using NAD as a coenzyme and as the energy source for the reaction. It is essential for DNA replication and repair of damaged DNA. This chain is DNA ligase, found in Mesorhizobium japonicum (strain LMG 29417 / CECT 9101 / MAFF 303099) (Mesorhizobium loti (strain MAFF 303099)).